A 282-amino-acid polypeptide reads, in one-letter code: Undecaprenyl-diphosphatase (282 aa).

8 helical membrane passes run 1–21, 39–59, 85–105, 115–135, 153–173, 193–213, 229–249, and 259–279; these read MTLI…FLPI, PGAA…MLYF, AKMG…GLLF, SLYW…LAEW, IGWK…IPGS, AARF…AFEL, NLAV…AFLL, and IFIA…GGGT.

The protein belongs to the UppP family.

The protein localises to the cell inner membrane. The enzyme catalyses di-trans,octa-cis-undecaprenyl diphosphate + H2O = di-trans,octa-cis-undecaprenyl phosphate + phosphate + H(+). Its function is as follows. Catalyzes the dephosphorylation of undecaprenyl diphosphate (UPP). Confers resistance to bacitracin. The protein is Undecaprenyl-diphosphatase of Chlorobium luteolum (strain DSM 273 / BCRC 81028 / 2530) (Pelodictyon luteolum).